The chain runs to 428 residues: Serine hydroxymethyltransferase (428 aa).

(6S)-5,6,7,8-tetrahydrofolate is bound by residues L127 and G131–L133. Position 236 is an N6-(pyridoxal phosphate)lysine (K236).

The protein belongs to the SHMT family. As to quaternary structure, homodimer. Pyridoxal 5'-phosphate is required as a cofactor.

It is found in the cytoplasm. It catalyses the reaction (6R)-5,10-methylene-5,6,7,8-tetrahydrofolate + glycine + H2O = (6S)-5,6,7,8-tetrahydrofolate + L-serine. It participates in one-carbon metabolism; tetrahydrofolate interconversion. The protein operates within amino-acid biosynthesis; glycine biosynthesis; glycine from L-serine: step 1/1. In terms of biological role, catalyzes the reversible interconversion of serine and glycine with tetrahydrofolate (THF) serving as the one-carbon carrier. This reaction serves as the major source of one-carbon groups required for the biosynthesis of purines, thymidylate, methionine, and other important biomolecules. Also exhibits THF-independent aldolase activity toward beta-hydroxyamino acids, producing glycine and aldehydes, via a retro-aldol mechanism. In Tropheryma whipplei (strain TW08/27) (Whipple's bacillus), this protein is Serine hydroxymethyltransferase.